A 333-amino-acid chain; its full sequence is Holliday junction branch migration complex subunit RuvB (333 aa).

The interval 1–182 (MEERLVSGDV…FGVISRLEYY (182 aa)) is large ATPase domain (RuvB-L). Residues Leu-21, Arg-22, Gly-63, Lys-66, Thr-67, Thr-68, 129 to 131 (EDY), Arg-172, Tyr-182, and Arg-219 contribute to the ATP site. Thr-67 lines the Mg(2+) pocket. The small ATPAse domain (RuvB-S) stretch occupies residues 183 to 253 (TTEHLTQIVM…LAKEALELLQ (71 aa)). A head domain (RuvB-H) region spans residues 256 to 333 (RLGLDHIDHK…EHFGMEVPKQ (78 aa)). The DNA site is built by Arg-311 and Arg-316.

It belongs to the RuvB family. As to quaternary structure, homohexamer. Forms an RuvA(8)-RuvB(12)-Holliday junction (HJ) complex. HJ DNA is sandwiched between 2 RuvA tetramers; dsDNA enters through RuvA and exits via RuvB. An RuvB hexamer assembles on each DNA strand where it exits the tetramer. Each RuvB hexamer is contacted by two RuvA subunits (via domain III) on 2 adjacent RuvB subunits; this complex drives branch migration. In the full resolvosome a probable DNA-RuvA(4)-RuvB(12)-RuvC(2) complex forms which resolves the HJ.

It localises to the cytoplasm. The catalysed reaction is ATP + H2O = ADP + phosphate + H(+). Its function is as follows. The RuvA-RuvB-RuvC complex processes Holliday junction (HJ) DNA during genetic recombination and DNA repair, while the RuvA-RuvB complex plays an important role in the rescue of blocked DNA replication forks via replication fork reversal (RFR). RuvA specifically binds to HJ cruciform DNA, conferring on it an open structure. The RuvB hexamer acts as an ATP-dependent pump, pulling dsDNA into and through the RuvAB complex. RuvB forms 2 homohexamers on either side of HJ DNA bound by 1 or 2 RuvA tetramers; 4 subunits per hexamer contact DNA at a time. Coordinated motions by a converter formed by DNA-disengaged RuvB subunits stimulates ATP hydrolysis and nucleotide exchange. Immobilization of the converter enables RuvB to convert the ATP-contained energy into a lever motion, pulling 2 nucleotides of DNA out of the RuvA tetramer per ATP hydrolyzed, thus driving DNA branch migration. The RuvB motors rotate together with the DNA substrate, which together with the progressing nucleotide cycle form the mechanistic basis for DNA recombination by continuous HJ branch migration. Branch migration allows RuvC to scan DNA until it finds its consensus sequence, where it cleaves and resolves cruciform DNA. This Geobacillus sp. (strain WCH70) protein is Holliday junction branch migration complex subunit RuvB.